The chain runs to 704 residues: Elongation factor G (704 aa).

One can recognise a tr-type G domain in the interval 10-290 (NKVRNIGIMA…AVIDYLPSPL (281 aa)). Residues 19–26 (AHIDAGKT), 83–87 (DTPGH), and 137–140 (NKMD) contribute to the GTP site.

Belongs to the TRAFAC class translation factor GTPase superfamily. Classic translation factor GTPase family. EF-G/EF-2 subfamily.

It localises to the cytoplasm. In terms of biological role, catalyzes the GTP-dependent ribosomal translocation step during translation elongation. During this step, the ribosome changes from the pre-translocational (PRE) to the post-translocational (POST) state as the newly formed A-site-bound peptidyl-tRNA and P-site-bound deacylated tRNA move to the P and E sites, respectively. Catalyzes the coordinated movement of the two tRNA molecules, the mRNA and conformational changes in the ribosome. The chain is Elongation factor G from Clavibacter sepedonicus (Clavibacter michiganensis subsp. sepedonicus).